The primary structure comprises 895 residues: WD repeat-containing protein 36 (895 aa).

WD repeat units follow at residues 30–63, 72–101, 110–143, 152–186, 193–230, 237–272, 277–320, and 327–361; these read VVRF…LVAV, CCMA…IVHT, HFLQ…LQLT, SAIL…LLYT, GVTA…MKFR, TSIS…INQM, STAI…RFRM, and TNIR…FNKS. Phosphoserine is present on residues S382 and S399. 6 WD repeats span residues 389 to 428, 441 to 475, 486 to 522, 527 to 562, 564 to 605, and 607 to 645; these read TKFA…GAYF, ATAV…HRGS, VRGV…HSVS, PNIM…VREF, GHQG…DCFL, and DSAP…SVVS.

In terms of assembly, part of the small subunit (SSU) processome, composed of more than 70 proteins and the RNA chaperone small nucleolar RNA (snoRNA) U3. In terms of tissue distribution, expressed in heart, placenta, liver, skeletal muscle, kidney and pancreas. In ocular tissues, strong expression in iris, sclera, ciliary muscle, ciliary body, retina and optic nerve.

Its subcellular location is the nucleus. The protein localises to the nucleolus. In terms of biological role, part of the small subunit (SSU) processome, first precursor of the small eukaryotic ribosomal subunit. During the assembly of the SSU processome in the nucleolus, many ribosome biogenesis factors, an RNA chaperone and ribosomal proteins associate with the nascent pre-rRNA and work in concert to generate RNA folding, modifications, rearrangements and cleavage as well as targeted degradation of pre-ribosomal RNA by the RNA exosome. Involved in the nucleolar processing of SSU 18S rRNA. Involved in T-cell activation and highly coregulated with IL2. The protein is WD repeat-containing protein 36 of Homo sapiens (Human).